The following is a 132-amino-acid chain: Small ribosomal subunit protein uS11 (132 aa).

It belongs to the universal ribosomal protein uS11 family. In terms of assembly, part of the 30S ribosomal subunit. Interacts with proteins S7 and S18. Binds to IF-3.

Located on the platform of the 30S subunit, it bridges several disparate RNA helices of the 16S rRNA. Forms part of the Shine-Dalgarno cleft in the 70S ribosome. The sequence is that of Small ribosomal subunit protein uS11 from Chlamydia trachomatis serovar A (strain ATCC VR-571B / DSM 19440 / HAR-13).